We begin with the raw amino-acid sequence, 187 residues long: MMSTSDAPLDPVEFIHSRIRTVPDWPQPGVMFRDITPLLQSAKALRVLVDLFVERYVDAKLDYIAGLDARGFIIAPIVAYELSVGFVPIRKVGKLPYATQRESYALEYGTATVEIHEDACKPGDRVVIVDDLIATGGTMMAGKNLLERLGAVVVEGAAIVDLPDLGGSALLRGAGLPLYTVTEFPGH.

Belongs to the purine/pyrimidine phosphoribosyltransferase family. In terms of assembly, homodimer.

It localises to the cytoplasm. It catalyses the reaction AMP + diphosphate = 5-phospho-alpha-D-ribose 1-diphosphate + adenine. The protein operates within purine metabolism; AMP biosynthesis via salvage pathway; AMP from adenine: step 1/1. Functionally, catalyzes a salvage reaction resulting in the formation of AMP, that is energically less costly than de novo synthesis. The protein is Adenine phosphoribosyltransferase of Burkholderia pseudomallei (strain 1106a).